Here is a 72-residue protein sequence, read N- to C-terminus: ATP synthase subunit c (72 aa).

2 helical membrane-spanning segments follow: residues 5 to 25 and 52 to 72; these read LLAAGIAVLAGIGAGIGIGIA and GLSEATAIYGLVISIILLFVV.

It belongs to the ATPase C chain family. F-type ATPases have 2 components, F(1) - the catalytic core - and F(0) - the membrane proton channel. F(1) has five subunits: alpha(3), beta(3), gamma(1), delta(1), epsilon(1). F(0) has three main subunits: a(1), b(2) and c(10-14). The alpha and beta chains form an alternating ring which encloses part of the gamma chain. F(1) is attached to F(0) by a central stalk formed by the gamma and epsilon chains, while a peripheral stalk is formed by the delta and b chains.

It localises to the cell membrane. F(1)F(0) ATP synthase produces ATP from ADP in the presence of a proton or sodium gradient. F-type ATPases consist of two structural domains, F(1) containing the extramembraneous catalytic core and F(0) containing the membrane proton channel, linked together by a central stalk and a peripheral stalk. During catalysis, ATP synthesis in the catalytic domain of F(1) is coupled via a rotary mechanism of the central stalk subunits to proton translocation. Functionally, key component of the F(0) channel; it plays a direct role in translocation across the membrane. A homomeric c-ring of between 10-14 subunits forms the central stalk rotor element with the F(1) delta and epsilon subunits. This chain is ATP synthase subunit c, found in Clostridium perfringens (strain SM101 / Type A).